A 401-amino-acid chain; its full sequence is Succinyl-diaminopimelate desuccinylase (401 aa).

Histidine 71 serves as a coordination point for Zn(2+). Aspartate 73 is an active-site residue. Aspartate 104 contacts Zn(2+). The active-site Proton acceptor is glutamate 138. Zn(2+) is bound by residues glutamate 139, glutamate 167, and histidine 352.

Belongs to the peptidase M20A family. DapE subfamily. As to quaternary structure, homodimer. Zn(2+) is required as a cofactor. Co(2+) serves as cofactor.

It catalyses the reaction N-succinyl-(2S,6S)-2,6-diaminopimelate + H2O = (2S,6S)-2,6-diaminopimelate + succinate. It functions in the pathway amino-acid biosynthesis; L-lysine biosynthesis via DAP pathway; LL-2,6-diaminopimelate from (S)-tetrahydrodipicolinate (succinylase route): step 3/3. In terms of biological role, catalyzes the hydrolysis of N-succinyl-L,L-diaminopimelic acid (SDAP), forming succinate and LL-2,6-diaminopimelate (DAP), an intermediate involved in the bacterial biosynthesis of lysine and meso-diaminopimelic acid, an essential component of bacterial cell walls. In Wolbachia sp. subsp. Brugia malayi (strain TRS), this protein is Succinyl-diaminopimelate desuccinylase.